A 96-amino-acid chain; its full sequence is Co-chaperonin GroES (96 aa).

This sequence belongs to the GroES chaperonin family. Heptamer of 7 subunits arranged in a ring. Interacts with the chaperonin GroEL.

The protein resides in the cytoplasm. In terms of biological role, together with the chaperonin GroEL, plays an essential role in assisting protein folding. The GroEL-GroES system forms a nano-cage that allows encapsulation of the non-native substrate proteins and provides a physical environment optimized to promote and accelerate protein folding. GroES binds to the apical surface of the GroEL ring, thereby capping the opening of the GroEL channel. The polypeptide is Co-chaperonin GroES (Caulobacter sp. (strain K31)).